We begin with the raw amino-acid sequence, 360 residues long: Phospho-N-acetylmuramoyl-pentapeptide-transferase (360 aa).

Transmembrane regions (helical) follow at residues 2–22, 26–46, 73–93, 97–117, 134–154, 168–188, 199–219, 236–256, 263–283, 288–308, and 339–359; these read LVWVADFLAQYFSIFSVFQYL, AILGVLTALLISLLVGPVMIR, TMGGALILVAIAVSTLLWADL, YVLITLGVTLLFGAIGWVDDW, YFWQSVFGFGAAVLLFKTAHL, ITLALGVGFVLLTYFVIVGGS, GLAIMPTVMVGGALAVFAYLS, TGELVIFLGALVGAGLGFLWF, VFMGDVGALALGAALGVVAVI, LVFFVMGGVFVMETVSVILQV, and IVRFWVITVVLVLVGLATLKI.

The protein belongs to the glycosyltransferase 4 family. MraY subfamily. Requires Mg(2+) as cofactor.

The protein resides in the cell inner membrane. The enzyme catalyses UDP-N-acetyl-alpha-D-muramoyl-L-alanyl-gamma-D-glutamyl-meso-2,6-diaminopimeloyl-D-alanyl-D-alanine + di-trans,octa-cis-undecaprenyl phosphate = di-trans,octa-cis-undecaprenyl diphospho-N-acetyl-alpha-D-muramoyl-L-alanyl-D-glutamyl-meso-2,6-diaminopimeloyl-D-alanyl-D-alanine + UMP. It functions in the pathway cell wall biogenesis; peptidoglycan biosynthesis. Catalyzes the initial step of the lipid cycle reactions in the biosynthesis of the cell wall peptidoglycan: transfers peptidoglycan precursor phospho-MurNAc-pentapeptide from UDP-MurNAc-pentapeptide onto the lipid carrier undecaprenyl phosphate, yielding undecaprenyl-pyrophosphoryl-MurNAc-pentapeptide, known as lipid I. The chain is Phospho-N-acetylmuramoyl-pentapeptide-transferase from Hahella chejuensis (strain KCTC 2396).